Reading from the N-terminus, the 265-residue chain is Hydroxyethylthiazole kinase 2 (265 aa).

Substrate is bound at residue M39. K115 and T168 together coordinate ATP. G195 is a substrate binding site.

The protein belongs to the Thz kinase family. Mg(2+) serves as cofactor.

The catalysed reaction is 5-(2-hydroxyethyl)-4-methylthiazole + ATP = 4-methyl-5-(2-phosphooxyethyl)-thiazole + ADP + H(+). It functions in the pathway cofactor biosynthesis; thiamine diphosphate biosynthesis; 4-methyl-5-(2-phosphoethyl)-thiazole from 5-(2-hydroxyethyl)-4-methylthiazole: step 1/1. Functionally, catalyzes the phosphorylation of the hydroxyl group of 4-methyl-5-beta-hydroxyethylthiazole (THZ). This chain is Hydroxyethylthiazole kinase 2, found in Clostridium botulinum (strain 657 / Type Ba4).